The primary structure comprises 328 residues: Pleckstrin homology domain protein OPY1 (328 aa).

Residues 19 to 52 are disordered; the sequence is NLIKKPSTSQNKTPTAQSSSGNNGAADGAPQGYH. Polar residues predominate over residues 24–41; it reads PSTSQNKTPTAQSSSGNN. Residues 213 to 328 are required for targeting to the cell membrane; sequence AEHQVCSGIL…IRKKLKAENI (116 aa). Positions 215–318 constitute a PH domain; that stretch reads HQVCSGILYT…WIINFKSGIL (104 aa).

Interacts with MSS4 (via N-terminus); to negatively regulate MSS4 kinase activity.

It localises to the cell membrane. The protein localises to the cytoplasm. In terms of biological role, binds phosphatidylinositol 4,5-bisphosphate (PtdIns(4,5)P2/PIP2) at the cell membrane. Negatively regulates the activity of phosphatidylinositol 4-phosphate 5-kinase MSS4. This is Pleckstrin homology domain protein OPY1 (OPY1) from Saccharomyces cerevisiae (strain ATCC 204508 / S288c) (Baker's yeast).